The primary structure comprises 491 residues: Cobyric acid synthase (491 aa).

The 188-residue stretch at 250 to 437 (RLRVVVPVLP…LHGIFDHPAA (188 aa)) folds into the GATase cobBQ-type domain. The active-site Nucleophile is the Cys-331. The active site involves His-429.

Belongs to the CobB/CobQ family. CobQ subfamily.

It participates in cofactor biosynthesis; adenosylcobalamin biosynthesis. In terms of biological role, catalyzes amidations at positions B, D, E, and G on adenosylcobyrinic A,C-diamide. NH(2) groups are provided by glutamine, and one molecule of ATP is hydrogenolyzed for each amidation. The protein is Cobyric acid synthase of Xanthomonas campestris pv. campestris (strain B100).